Here is a 213-residue protein sequence, read N- to C-terminus: Kynurenine formamidase (213 aa).

Trp18 lines the substrate pocket. Residues His48, His52, and Asp54 each contribute to the Zn(2+) site. Catalysis depends on His58, which acts as the Proton donor/acceptor. Zn(2+) is bound by residues His160 and Glu172.

Belongs to the Cyclase 1 superfamily. KynB family. As to quaternary structure, homodimer. Zn(2+) is required as a cofactor.

It catalyses the reaction N-formyl-L-kynurenine + H2O = L-kynurenine + formate + H(+). It functions in the pathway amino-acid degradation; L-tryptophan degradation via kynurenine pathway; L-kynurenine from L-tryptophan: step 2/2. Catalyzes the hydrolysis of N-formyl-L-kynurenine to L-kynurenine, the second step in the kynurenine pathway of tryptophan degradation. The polypeptide is Kynurenine formamidase (Burkholderia multivorans (strain ATCC 17616 / 249)).